Consider the following 352-residue polypeptide: N-acetyl-gamma-glutamyl-phosphate reductase (352 aa).

Cysteine 156 is a catalytic residue.

This sequence belongs to the NAGSA dehydrogenase family. Type 1 subfamily.

It localises to the cytoplasm. The catalysed reaction is N-acetyl-L-glutamate 5-semialdehyde + phosphate + NADP(+) = N-acetyl-L-glutamyl 5-phosphate + NADPH + H(+). It functions in the pathway amino-acid biosynthesis; L-arginine biosynthesis; N(2)-acetyl-L-ornithine from L-glutamate: step 3/4. Functionally, catalyzes the NADPH-dependent reduction of N-acetyl-5-glutamyl phosphate to yield N-acetyl-L-glutamate 5-semialdehyde. This Rhodospirillum rubrum (strain ATCC 11170 / ATH 1.1.1 / DSM 467 / LMG 4362 / NCIMB 8255 / S1) protein is N-acetyl-gamma-glutamyl-phosphate reductase.